We begin with the raw amino-acid sequence, 667 residues long: WD repeat-containing protein 48 homolog (667 aa).

WD repeat units lie at residues 26-65 (QHRNGVNALQLDSNNGKLYSAGRDAIIRVWNTRTESNDKY), 71-110 (HHNDWVNDIVLCCNGRNLISASCDTTVKVWNAHKGFCMST), 113-152 (THRDYVQALAYAKDREQVASAGLDKAIFLWDVNTLTALTA), 164-203 (GSKDSIYSLAMNPSGTVIVSGSTENILRIWDPRTCMRSMK), 206-245 (GHTENVRCLVVSPDGNQVVSGSSDGTIKVWNLGQQRCIQT), 248-287 (VHKEGVWSLLMSENFQYIISGSRDRNIIVTEMRNPSNKML), 290-329 (EEKAPVLSLGYNIDKTGVWATTWNSDIRCWKLPMYDRCTL), and 349-388 (KGGAAIKECTVLNDKRYIITKDSQDQVVVYDVLRVIKKEE). The interval 591-615 (ETTPSGGNANNSLQNSQSDANSEGS) is disordered.

This sequence belongs to the WD repeat WDR48 family. As to quaternary structure, catalytic component of the Usp12-46 deubiquitylase complex consisting of Usp12-46, Wdr20 and Uaf1; regulatory subunit that, together wtih Wdr20, stabilizes Usp12-46. The Usp12-46 deubiquitylase complex associates with arr/arrow; the interaction leads to deubiquitination and stabilization of arr/arrow.

In terms of biological role, regulatory component of the Usp12-46 deubiquitylase complex. activates deubiquitination by increasing the catalytic turnover without increasing the affinity of deubiquitinating enzymes for the substrate. The complex deubiquitylates the wg/wingless-signaling receptor arr/arrow, which stabilizes the receptor and increases its concentration at the cell surface; this enhances the sensitivity of cells to wg/wingless-signal stimulation. This increases the amplitude and spatial range of the signaling response to the wg/wingless morphogen gradient, facilitating the precise concentration-dependent regulation of its target genes. Together with Wdr20 and Usp12-46 required for wg/wingless-mediated signaling in the wing imaginal disc and for wg/wingless-dependent regulation of intestinal stem cell proliferation. This is WD repeat-containing protein 48 homolog from Drosophila virilis (Fruit fly).